The following is a 235-amino-acid chain: Probable transcriptional regulatory protein Cla_1081 (235 aa).

This sequence belongs to the TACO1 family.

The protein localises to the cytoplasm. The protein is Probable transcriptional regulatory protein Cla_1081 of Campylobacter lari (strain RM2100 / D67 / ATCC BAA-1060).